A 335-amino-acid chain; its full sequence is Biotin synthase (335 aa).

Residues 46–274 (YDIQLASLFS…ESKIRLSAGR (229 aa)) enclose the Radical SAM core domain. Residues Cys-61, Cys-65, and Cys-68 each coordinate [4Fe-4S] cluster. Cys-105, Cys-137, Cys-197, and Arg-269 together coordinate [2Fe-2S] cluster.

This sequence belongs to the radical SAM superfamily. Biotin synthase family. As to quaternary structure, homodimer. The cofactor is [4Fe-4S] cluster. [2Fe-2S] cluster is required as a cofactor.

It carries out the reaction (4R,5S)-dethiobiotin + (sulfur carrier)-SH + 2 reduced [2Fe-2S]-[ferredoxin] + 2 S-adenosyl-L-methionine = (sulfur carrier)-H + biotin + 2 5'-deoxyadenosine + 2 L-methionine + 2 oxidized [2Fe-2S]-[ferredoxin]. It participates in cofactor biosynthesis; biotin biosynthesis; biotin from 7,8-diaminononanoate: step 2/2. In terms of biological role, catalyzes the conversion of dethiobiotin (DTB) to biotin by the insertion of a sulfur atom into dethiobiotin via a radical-based mechanism. This is Biotin synthase from Prochlorococcus marinus (strain MIT 9301).